We begin with the raw amino-acid sequence, 341 residues long: Inner membrane ABC transporter permease protein YejE (341 aa).

Topologically, residues 1–21 are cytoplasmic; the sequence is MSRLSPVNQARWARFRHNRRG. Residues 22-42 traverse the membrane as a helical segment; it reads YWSLWIFLVLFGLSLCSELIA. Topologically, residues 43–143 are periplasmic; the sequence is NDKPLLVRYD…ARILYGTRIS (101 aa). The ABC transmembrane type-1 domain occupies 140–332; sequence TRISVLFGLM…LLIFIGEAVR (193 aa). A helical membrane pass occupies residues 144 to 164; sequence VLFGLMLTLCSSVMGVLAGAL. The Cytoplasmic portion of the chain corresponds to 165 to 178; it reads QGYYGGKVDLWGQR. Residues 179-199 traverse the membrane as a helical segment; that stretch reads FIEVWSGMPTLFLIILLSSVV. Topologically, residues 200–201 are periplasmic; the sequence is QP. The helical transmembrane segment at 202–222 threads the bilayer; that stretch reads NFWWLLAITVLFGWMSLVGVV. At 223 to 252 the chain is on the cytoplasmic side; sequence RAEFLRTRNFDYIRAAQALGVSDRSIILRH. A helical transmembrane segment spans residues 253–273; sequence MLPNAMVATLTFLPFILCSSI. Topologically, residues 274 to 307 are periplasmic; that stretch reads TTLTSLDFLGFGLPLGSPSLGELLLQGKNNLQAP. Residues 308–328 form a helical membrane-spanning segment; it reads WLGITAFLSVAILLSLLIFIG. Residues 329–341 lie on the Cytoplasmic side of the membrane; it reads EAVRDAFDPNKAV.

It belongs to the binding-protein-dependent transport system permease family. OppBC subfamily.

The protein localises to the cell inner membrane. In terms of biological role, probably part of a binding-protein-dependent transport system. Probably responsible for the translocation of the substrate across the membrane. The chain is Inner membrane ABC transporter permease protein YejE (yejE) from Escherichia coli (strain K12).